Reading from the N-terminus, the 542-residue chain is MLO-like protein 7 (542 aa).

Residues 1–38 (MITRSRCRRSLLWFLVFHGGATATGAPSGGKELSQTPT) are Extracellular-facing. A helical transmembrane segment spans residues 39 to 59 (WAVAVVCTFLILISHLLEKGL). Topologically, residues 60 to 82 (QRLANWLWKKHKNSLLEALEKIK) are cytoplasmic. Residues 83–103 (AELMILGFISLLLTFGEPYIL) traverse the membrane as a helical segment. Over 104-165 (KICVPRKAAL…ITLKGLHQLH (62 aa)) the chain is Extracellular. The helical transmembrane segment at 166 to 186 (ILLFFLAIFHIVYSLITMMLS) threads the bilayer. At 187 to 288 (RLKIRGWKKW…IKRSLEDDFK (102 aa)) the chain is on the cytoplasmic side. The chain crosses the membrane as a helical span at residues 289 to 309 (LVVGISPVLWASFVIFLLFNV). Over 310–315 (NGWRTL) the chain is Extracellular. Residues 316–336 (FWASIPPLLIILAVGTKLQAI) form a helical membrane-spanning segment. Residues 337–374 (MATMALEIVETHAVVQGMPLVQGSDRYFWFDCPQLLLH) lie on the Cytoplasmic side of the membrane. A helical transmembrane segment spans residues 375-395 (LIHFALFQNAFQITHFFWIWY). Residues 396–414 (SFGLKSCFHKDFNLVVSKL) are Extracellular-facing. Residues 415 to 435 (FLCLGALILCSYITLPLYALV) form a helical membrane-spanning segment. Residues 436–542 (TQMGSHMKKA…QQQEMQFHNS (107 aa)) are Cytoplasmic-facing. The interval 449–470 (EQMAKALKKWHKDIKLKKGKAR) is calmodulin-binding.

The protein belongs to the MLO family. Restricted to pollen, synergids, pistils and immature anthers. Also detected in seedlings, leaves, stems and inflorescens.

It is found in the cell membrane. Its subcellular location is the endomembrane system. May be involved in modulation of pathogen defense and leaf cell death. Activity seems to be regulated by Ca(2+)-dependent calmodulin binding and seems not to require heterotrimeric G proteins. Controls pollen tube reception in the female gametophyte synergids. The protein is MLO-like protein 7 (MLO7) of Arabidopsis thaliana (Mouse-ear cress).